A 175-amino-acid chain; its full sequence is Putative carbonic anhydrase-like protein YbcF (175 aa).

Belongs to the beta-class carbonic anhydrase family.

This is Putative carbonic anhydrase-like protein YbcF (ybcF) from Bacillus subtilis (strain 168).